A 704-amino-acid chain; its full sequence is Protein polyglycylase TTLL10 (704 aa).

Disordered regions lie at residues 1–32 (MALH…LPSP), 46–125 (GHRA…SVKE), and 137–170 (DADD…PGQG). Basic residues predominate over residues 93 to 105 (VSSKRSKRSRIHP). Residues 114–125 (THEKQMGSSVKE) show a composition bias toward basic and acidic residues. In terms of domain architecture, TTL spans 169-540 (QGPFFYIGGT…TCQKSLHSQK (372 aa)). ATP is bound by residues lysine 301, 307–308 (QG), 350–353 (QRYV), 363–365 (KFD), and 406–407 (TN). Glutamine 307 lines the a protein pocket. Residues aspartate 486, glutamate 499, and asparagine 501 each contribute to the Mg(2+) site. The disordered stretch occupies residues 565–704 (LASSRPLNRL…EQRSTSHRGS (140 aa)). 2 stretches are compositionally biased toward pro residues: residues 576–588 (NPNP…ANPH) and 596–612 (HPHP…PPRP). 2 stretches are compositionally biased toward low complexity: residues 616–629 (AASS…AAIS) and 654–667 (SDSS…SEPS).

The cofactor is Mg(2+). Highly expressed in testis. Expressed in brain, heart, kidney, liver, lung, muscle and trachea.

It is found in the cytoplasm. The protein resides in the cytoskeleton. It localises to the cell projection. The protein localises to the cilium. Its subcellular location is the cilium axoneme. The catalysed reaction is (glycyl)(n)-glycyl-L-glutamyl-[protein] + glycine + ATP = (glycyl)(n+1)-glycyl-L-glutamyl-[protein] + ADP + phosphate + H(+). Functionally, polyglycylase which modifies both tubulin and non-tubulin proteins, generating polyglycine side chains of variable lengths on the gamma-carboxyl groups of specific glutamate residues of target proteins. Involved in the elongation step rather than the initiation step of the polyglycylation reaction. Polyglycylates alpha-tubulin and beta-tubulin. Polyglycylates non-tubulin proteins such as nucleosome assembly protein NAP1. The chain is Protein polyglycylase TTLL10 from Mus musculus (Mouse).